Reading from the N-terminus, the 153-residue chain is Protein DpnD (153 aa).

The chain is Protein DpnD from Streptococcus pneumoniae serotype 4 (strain ATCC BAA-334 / TIGR4).